The sequence spans 364 residues: DNA polymerase IV (364 aa).

The 181-residue stretch at 7-187 folds into the UmuC domain; the sequence is IIHVDMDAFY…LPVNRVPGVG (181 aa). Mg(2+) is bound by residues Asp-11 and Asp-105. The active site involves Glu-106.

Belongs to the DNA polymerase type-Y family. Monomer. It depends on Mg(2+) as a cofactor.

The protein localises to the cytoplasm. It catalyses the reaction DNA(n) + a 2'-deoxyribonucleoside 5'-triphosphate = DNA(n+1) + diphosphate. In terms of biological role, poorly processive, error-prone DNA polymerase involved in untargeted mutagenesis. Copies undamaged DNA at stalled replication forks, which arise in vivo from mismatched or misaligned primer ends. These misaligned primers can be extended by PolIV. Exhibits no 3'-5' exonuclease (proofreading) activity. May be involved in translesional synthesis, in conjunction with the beta clamp from PolIII. This chain is DNA polymerase IV, found in Stenotrophomonas maltophilia (strain K279a).